We begin with the raw amino-acid sequence, 305 residues long: tRNA-splicing endonuclease (305 aa).

Active-site residues include tyrosine 246, histidine 257, and lysine 287.

Belongs to the tRNA-intron endonuclease family. Archaeal long subfamily. Homodimer.

The catalysed reaction is pretRNA = a 3'-half-tRNA molecule with a 5'-OH end + a 5'-half-tRNA molecule with a 2',3'-cyclic phosphate end + an intron with a 2',3'-cyclic phosphate and a 5'-hydroxyl terminus.. Functionally, endonuclease that removes tRNA introns. Cleaves pre-tRNA at the 5'- and 3'-splice sites to release the intron. The products are an intron and two tRNA half-molecules bearing 2',3' cyclic phosphate and 5'-OH termini. Recognizes a pseudosymmetric substrate in which 2 bulged loops of 3 bases are separated by a stem of 4 bp. The chain is tRNA-splicing endonuclease from Archaeoglobus fulgidus (strain ATCC 49558 / DSM 4304 / JCM 9628 / NBRC 100126 / VC-16).